Consider the following 211-residue polypeptide: Probable nicotinate-nucleotide adenylyltransferase (211 aa).

The protein belongs to the NadD family.

It catalyses the reaction nicotinate beta-D-ribonucleotide + ATP + H(+) = deamido-NAD(+) + diphosphate. It functions in the pathway cofactor biosynthesis; NAD(+) biosynthesis; deamido-NAD(+) from nicotinate D-ribonucleotide: step 1/1. Its function is as follows. Catalyzes the reversible adenylation of nicotinate mononucleotide (NaMN) to nicotinic acid adenine dinucleotide (NaAD). The protein is Probable nicotinate-nucleotide adenylyltransferase of Shewanella sediminis (strain HAW-EB3).